The following is a 58-amino-acid chain: Small ribosomal subunit protein bS21 (58 aa).

Positions 35-58 (REHYEKPSVKRKKKSEAARKRKFK) are disordered. Basic residues predominate over residues 43–58 (VKRKKKSEAARKRKFK).

Belongs to the bacterial ribosomal protein bS21 family.

This chain is Small ribosomal subunit protein bS21, found in Ruminiclostridium cellulolyticum (strain ATCC 35319 / DSM 5812 / JCM 6584 / H10) (Clostridium cellulolyticum).